The primary structure comprises 356 residues: MKNIPTIVRNLGTINIRNNVGFSSVPDQVRESSMVKGFELNVLVVGRRGLGTSTLINSIFAAPLVDKKRTNNITATRNEIVENDISLEISIVTYHEANISPVLDYINAMNREYFDNEQGLYKAFKDNRVHVCLYLLPSDTLTDQEIKNMYELSQSCNLVPIIPKADMYTPDELADVKENVRQILSENNIFSFVPYLNENDGDLTEEVADIVGCMPFAVIASETMYEHGGEIIRGRKYPWGFINIDQEESNDFKRLQRLLIYTNLDELTMKTNHLFYNNYRKKIFEIENDCGAMKEARYLRLRTETIRILNDKYESRINALRKEEEEMERFYSEKIREMNDKMGEISKQVEKSLHVE.

The region spanning 36–286 is the Septin-type G domain; it reads KGFELNVLVV…NNYRKKIFEI (251 aa). A G1 motif region spans residues 46–53; it reads GRRGLGTS. Residues 46–53 and T70 contribute to the GTP site; that span reads GRRGLGTS. The tract at residues 93–96 is G3 motif; sequence TYHE. The tract at residues 163–166 is G4 motif; the sequence is PKAD. Residues 164 to 172 and R235 each bind GTP; that span reads KADMYTPDE.

Belongs to the TRAFAC class TrmE-Era-EngA-EngB-Septin-like GTPase superfamily. Septin GTPase family. As to quaternary structure, component of the septin complex.

In terms of biological role, septins are GTPases involved in cytokinesis. The septins localize to the site of cleavage and act as a structural scaffold that recruits different components involved in diverse processes at specific stages during the cell cycle. Septins are also involved in cell morphogenesis, chitin deposition, cell cycle regulation, cell compartmentalization and spore wall formation. This Encephalitozoon cuniculi (strain GB-M1) (Microsporidian parasite) protein is Cell division control protein 10 (CDC10).